Here is a 509-residue protein sequence, read N- to C-terminus: Aldehyde dehydrogenase 1A1 (509 aa).

NAD(+)-binding positions include 175–178, 201–204, 234–235, 254–255, and 277–279; these read IPWN, KPAE, GP, GS, and ELG. E277 acts as the Proton acceptor in catalysis. Residue C311 is the Nucleophile of the active site. NAD(+) is bound by residues 357 to 361 and 408 to 410; these read EQFQK and EIF.

Belongs to the aldehyde dehydrogenase family. Homotetramer.

The protein localises to the cytoplasm. Its subcellular location is the cytosol. The protein resides in the cell projection. It localises to the axon. It catalyses the reaction an aldehyde + NAD(+) + H2O = a carboxylate + NADH + 2 H(+). The catalysed reaction is all-trans-retinal + NAD(+) + H2O = all-trans-retinoate + NADH + 2 H(+). The enzyme catalyses 9-cis-retinal + NAD(+) + H2O = 9-cis-retinoate + NADH + 2 H(+). It carries out the reaction 11-cis-retinal + NAD(+) + H2O = 11-cis-retinoate + NADH + 2 H(+). It catalyses the reaction 13-cis-retinal + NAD(+) + H2O = 13-cis-retinoate + NADH + 2 H(+). The catalysed reaction is 3-deoxyglucosone + NAD(+) + H2O = 2-dehydro-3-deoxy-D-gluconate + NADH + 2 H(+). The enzyme catalyses (E)-4-hydroxynon-2-enal + NAD(+) + H2O = (E)-4-hydroxynon-2-enoate + NADH + 2 H(+). It carries out the reaction malonaldehyde + NAD(+) + H2O = 3-oxopropanoate + NADH + 2 H(+). It catalyses the reaction hexanal + NAD(+) + H2O = hexanoate + NADH + 2 H(+). The catalysed reaction is propanal + NAD(+) + H2O = propanoate + NADH + 2 H(+). The enzyme catalyses acetaldehyde + NAD(+) + H2O = acetate + NADH + 2 H(+). It carries out the reaction benzaldehyde + NAD(+) + H2O = benzoate + NADH + 2 H(+). It catalyses the reaction 4-aminobutanal + NAD(+) + H2O = 4-aminobutanoate + NADH + 2 H(+). Its pathway is cofactor metabolism; retinol metabolism. Cytosolic dehydrogenase that catalyzes the irreversible oxidation of a wide range of aldehydes to their corresponding carboxylic acid. Functions downstream of retinol dehydrogenases and catalyzes the oxidation of retinaldehyde into retinoic acid, the second step in the oxidation of retinol/vitamin A into retinoic acid. This pathway is crucial to control the levels of retinol and retinoic acid, two important molecules which excess can be teratogenic and cytotoxic. Also oxidizes aldehydes resulting from lipid peroxidation like (E)-4-hydroxynon-2-enal/HNE, malonaldehyde and hexanal that form protein adducts and are highly cytotoxic. By participating for instance to the clearance of (E)-4-hydroxynon-2-enal/HNE in the lens epithelium prevents the formation of HNE-protein adducts and lens opacification. Also functions downstream of fructosamine-3-kinase in the fructosamine degradation pathway by catalyzing the oxidation of 3-deoxyglucosone, the carbohydrate product of fructosamine 3-phosphate decomposition, which is itself a potent glycating agent that may react with lysine and arginine side-chains of proteins. Also has an aminobutyraldehyde dehydrogenase activity and is probably part of an alternative pathway for the biosynthesis of GABA/4-aminobutanoate in midbrain, thereby playing a role in GABAergic synaptic transmission. This is Aldehyde dehydrogenase 1A1 from Gallus gallus (Chicken).